The primary structure comprises 443 residues: Serine/threonine-protein kinase ISR1 (443 aa).

The Protein kinase domain occupies 135–415; sequence LPSNKLVGQG…LRNDLFQDWK (281 aa). Residues 141-149 and Lys169 each bind ATP; that span reads VGQGSYSYV. The active-site Proton acceptor is Asp280.

The protein belongs to the protein kinase superfamily. Ser/Thr protein kinase family.

It carries out the reaction L-seryl-[protein] + ATP = O-phospho-L-seryl-[protein] + ADP + H(+). The catalysed reaction is L-threonyl-[protein] + ATP = O-phospho-L-threonyl-[protein] + ADP + H(+). Probable serine/threonine protein kinase which may function redundantly with MPK1-independent branch of the PCK1 pathway that is presumed to be required for the tolerance to high temperatures and staurosporine. This chain is Serine/threonine-protein kinase ISR1 (ISR1), found in Saccharomyces cerevisiae (strain ATCC 204508 / S288c) (Baker's yeast).